The primary structure comprises 578 residues: Proline--tRNA ligase (578 aa).

The protein belongs to the class-II aminoacyl-tRNA synthetase family. ProS type 1 subfamily. In terms of assembly, homodimer.

The protein localises to the cytoplasm. It catalyses the reaction tRNA(Pro) + L-proline + ATP = L-prolyl-tRNA(Pro) + AMP + diphosphate. Catalyzes the attachment of proline to tRNA(Pro) in a two-step reaction: proline is first activated by ATP to form Pro-AMP and then transferred to the acceptor end of tRNA(Pro). As ProRS can inadvertently accommodate and process non-cognate amino acids such as alanine and cysteine, to avoid such errors it has two additional distinct editing activities against alanine. One activity is designated as 'pretransfer' editing and involves the tRNA(Pro)-independent hydrolysis of activated Ala-AMP. The other activity is designated 'posttransfer' editing and involves deacylation of mischarged Ala-tRNA(Pro). The misacylated Cys-tRNA(Pro) is not edited by ProRS. The protein is Proline--tRNA ligase of Burkholderia orbicola (strain AU 1054).